The chain runs to 177 residues: Nucleoside triphosphate/diphosphate phosphatase (177 aa).

The active-site Proton donor is the arginine 23. Residues asparagine 87, aspartate 103, aspartate 105, aspartate 107, aspartate 120, and glutamate 123 each coordinate Mg(2+).

This sequence belongs to the Ntdp family. It depends on Mg(2+) as a cofactor.

It carries out the reaction a ribonucleoside 5'-triphosphate + H2O = a ribonucleoside 5'-diphosphate + phosphate + H(+). The enzyme catalyses a ribonucleoside 5'-diphosphate + H2O = a ribonucleoside 5'-phosphate + phosphate + H(+). In terms of biological role, has nucleoside phosphatase activity towards nucleoside triphosphates and nucleoside diphosphates. This Streptococcus equi subsp. zooepidemicus (strain MGCS10565) protein is Nucleoside triphosphate/diphosphate phosphatase.